The chain runs to 107 residues: EPIDERMAL PATTERNING FACTOR-like protein 3 (107 aa).

The N-terminal stretch at 1–24 (MEYMFLLMSKFFFVFPIIIYIGPA) is a signal peptide. Cystine bridges form between C64–C102, C68–C74, and C71–C104.

The protein belongs to the plant cysteine rich small secretory peptide family. Epidermal patterning factor subfamily.

Its subcellular location is the secreted. In terms of biological role, controls stomatal patterning. This is EPIDERMAL PATTERNING FACTOR-like protein 3 from Arabidopsis thaliana (Mouse-ear cress).